Consider the following 333-residue polypeptide: MRIWWLLLVMGACTRSVFSQDTCRQGHSGIPGNPGHNGLPGRDGRDGAKGDKGDAGEPGHPGGPGKDGIRGEKGEPGADGRVEAKGIKGDPGSRGSPGKHGPKGSIGPTGEQGLPGETGPQGQKGDKGEVGPTGPEGLMGSTGPLGPKGLPGPMGPIGKPGPRGEAGPMGPQGEPGVRGMRGWKGDRGEKGKVGEAPLVPKSAFTVGLTVISKFPPPDAPIKFDKILYNELNHYNVATGKFTCHVAGVYYFTYHITVFSRNVQVSLVKNGVKVLHTKDSYMSSEDQASGGIVQELKLGDEVWMQVTGGERFNGLFADEDDDTTFTGFLLFSSS.

The first 19 residues, 1–19 (MRIWWLLLVMGACTRSVFS), serve as a signal peptide directing secretion. A disordered region spans residues 22 to 194 (TCRQGHSGIP…GDRGEKGKVG (173 aa)). Collagen-like domains lie at 24-82 (RQGH…DGRV), 84-130 (AKGI…KGEV), and 134-193 (GPEG…KGKV). 3 positions are modified to 4-hydroxyproline: Pro31, Pro34, and Pro40. The span at 42–57 (RDGRDGAKGDKGDAGE) shows a compositional bias: basic and acidic residues. 3 positions are modified to 4-hydroxyproline: Pro58, Pro61, and Pro64. Basic and acidic residues predominate over residues 67-88 (DGIRGEKGEPGADGRVEAKGIK). Lys73 is modified (5-hydroxylysine). O-linked (Gal...) hydroxylysine glycosylation is present at Lys73. 2 positions are modified to 4-hydroxyproline: Pro76 and Pro115. Lys127 carries the post-translational modification 5-hydroxylysine. A glycan (O-linked (Gal...) hydroxylysine) is linked at Lys127. 3 positions are modified to 4-hydroxyproline: Pro151, Pro160, and Pro175. The span at 183 to 193 (WKGDRGEKGKV) shows a compositional bias: basic and acidic residues. Positions 197-333 (PLVPKSAFTV…FTGFLLFSSS (137 aa)) constitute a C1q domain.

In terms of assembly, multimers (predominantly trimers). Interacts with ADIPOQ via the C1q domain to form a heterotrimeric complex. In terms of processing, the isomeric forms of the hydroxylated amino acids could not be determined in the mass-spectrometric methods reported in PubMed:18787108 but are assumed on the basis of their occurrence in collagen-like domains. In terms of tissue distribution, expressed predominantly in adipose tissue. Females express higher levels than males.

The protein localises to the secreted. In terms of biological role, probable adipokine. Activates AMPK, AKT, and p44/42 MAPK signaling pathways. The polypeptide is Complement C1q and tumor necrosis factor-related protein 9 (C1qtnf9) (Mus musculus (Mouse)).